The primary structure comprises 1287 residues: Pullulanase A (1287 aa).

The N-terminal stretch at M1 to S44 is a signal peptide. Residues I42 to P139 are disordered. The segment covering T48–T61 has biased composition (low complexity). The span at D79–L90 shows a compositional bias: polar residues. 2 stretches are compositionally biased toward low complexity: residues T99–P113 and E122–E133. Residues W163–W165, W175, D221, W270–W272, W283, K325, and N330 each bind substrate. S668 and Y670 together coordinate Ca(2+). Substrate-binding positions include Y674–D675 and F750. D785 acts as the Nucleophile in catalysis. E814 functions as the Proton donor in the catalytic mechanism. Position 816 (W816) interacts with substrate. Ca(2+)-binding residues include M835, T838, and D839. D846, R849, and Y856 together coordinate substrate. Positions 889 and 893 each coordinate Ca(2+). Substrate contacts are provided by residues N903, K976, and D996–Y998. D999 is a binding site for Ca(2+). Positions V1147–N1255 are disordered. Residues S1156–N1203 show a composition bias toward basic and acidic residues. Residues S1212–S1225 show a composition bias toward low complexity. A compositionally biased stretch (basic and acidic residues) spans E1228 to S1239. Positions L1253–G1257 match the LPXTG sorting signal motif. T1256 bears the Pentaglycyl murein peptidoglycan amidated threonine mark. A propeptide spans G1257–N1287 (removed by sortase).

Belongs to the glycosyl hydrolase 13 family.

The protein resides in the secreted. It is found in the cell wall. It localises to the cell surface. The catalysed reaction is Hydrolysis of (1-&gt;6)-alpha-D-glucosidic linkages in pullulan, amylopectin and glycogen, and in the alpha- and beta-limit dextrins of amylopectin and glycogen.. Inhibited by 4-O-alpha-D-glucopyranosylmoranoline (G1M). Functionally, virulence factor. Involved in the degradation of glycogen of the mammalian host cells. Hydrolyzes the alpha-1,6-branchpoints of glycogen. Hydrolyzes pullulan. Does not hydrolyze dextran. Binds to mouse lung alveolar type II cells that are rich in glycogen stores. Is an alpha-glucan-specific carbohydrate-binding protein, which binds to amylose (pure alpha-(1,4)-linked glucose), amylopectin (alpha-(1,4)-linked glucose with alpha-(1,6) branch points), pullulan (linear polymer of mixed alpha-(1,4)- and alpha-(1,6)-linked glucose) and glycogen (similar to amylopectin with more frequent alpha-(1,6) branch points) in vitro. Does not bind to dextran (a linear polymer of alpha-(1,6)-linked glucose). This chain is Pullulanase A, found in Streptococcus pneumoniae.